The primary structure comprises 509 residues: MSSHIQIFDTTLRDGEQTPGVNFTFDERLRIALQLEKWGVDVIEAGFPASSTGSFKSVQAIAQTLTTTAVCGLARCKKSDIDAVYEATKDAAKPVVHVFIATSPIHLEHKLKMSQEDVLASIKEHVTYAKQLFDVVQFSPEDATRTELPFLVKCVQTAVDAGATVINIPDTVGYSYHDEYAHIFKTLTESVTSSNEIIYSAHCHDDLGMAVSNSLAAIEGGARRIEGTVNGIGERAGNAALEEVALALYVRNDHYGAQTALNLEETKKTSDLISRYAGIRVPRNKAIVGQNAFSHESGIHQDGVLKHRETYEIMTPQLVGVSTTELPLGKLSGKHAFSEKLKALGYNIDKEAQIDLFKQFKTIADKKKSVSDRDIHAIIQGSEHEHQALYKLETLQLQYVSSGLQSAVVVVKDKEGHIYQDSSIGTGSIVAIYNAVDRIFQKETELIDYRINSVTEGTDAQAEVHVNLLIEGKTVNGFGIDHDILQASCKAYVEAHAKFAAENVEKVGN.

Residues 5–267 (IQIFDTTLRD…QTALNLEETK (263 aa)) enclose the Pyruvate carboxyltransferase domain. The Mn(2+) site is built by aspartate 14, histidine 202, histidine 204, and asparagine 238. Positions 391-509 (KLETLQLQYV…AAENVEKVGN (119 aa)) are regulatory domain.

This sequence belongs to the alpha-IPM synthase/homocitrate synthase family. LeuA type 1 subfamily. As to quaternary structure, homodimer. It depends on Mn(2+) as a cofactor.

The protein localises to the cytoplasm. The catalysed reaction is 3-methyl-2-oxobutanoate + acetyl-CoA + H2O = (2S)-2-isopropylmalate + CoA + H(+). It functions in the pathway amino-acid biosynthesis; L-leucine biosynthesis; L-leucine from 3-methyl-2-oxobutanoate: step 1/4. Catalyzes the condensation of the acetyl group of acetyl-CoA with 3-methyl-2-oxobutanoate (2-ketoisovalerate) to form 3-carboxy-3-hydroxy-4-methylpentanoate (2-isopropylmalate). This chain is 2-isopropylmalate synthase, found in Staphylococcus aureus (strain Mu3 / ATCC 700698).